The sequence spans 598 residues: Aspartate--tRNA(Asp/Asn) ligase (598 aa).

Glu-174 contributes to the L-aspartate binding site. An aspartate region spans residues 198–201; it reads QQLK. Arg-220 serves as a coordination point for L-aspartate. ATP contacts are provided by residues 220–222 and Gln-229; that span reads RDE. His-458 lines the L-aspartate pocket. Position 492 (Glu-492) interacts with ATP. Residue Arg-499 participates in L-aspartate binding. ATP is bound at residue 544–547; sequence GIDR.

It belongs to the class-II aminoacyl-tRNA synthetase family. Type 1 subfamily. Homodimer.

The protein resides in the cytoplasm. It catalyses the reaction tRNA(Asx) + L-aspartate + ATP = L-aspartyl-tRNA(Asx) + AMP + diphosphate. Functionally, aspartyl-tRNA synthetase with relaxed tRNA specificity since it is able to aspartylate not only its cognate tRNA(Asp) but also tRNA(Asn). Reaction proceeds in two steps: L-aspartate is first activated by ATP to form Asp-AMP and then transferred to the acceptor end of tRNA(Asp/Asn). The polypeptide is Aspartate--tRNA(Asp/Asn) ligase (Dehalococcoides mccartyi (strain CBDB1)).